The sequence spans 505 residues: MPDSMMDMEHRDHQLHRQQQQSHHHQPPRLTASTSTFAPPAPAGSQSEERDRDRDRERDHHLHHHQSNNVASSPLPVTASIQLHQQQPQQQQQQQPLTQLQQPQLREREHHQQQQQQQQQMMQQPQQQQQMQQPQQQLPHSHHALMQQSQQQQAIHRAEARRADEEISDKASTCGKLLIFLSVALVIMTLPFSLFVCFKVVQEYERAVIFRLGRLMQGGAKGPGIFFILPCIDSYARVDLRTRTYDVPPQEVLTKDSVTVSVDAVVYYRVSNATVSIANVENAHHSTRLLAQTTLRNTMGTRHLHEILSERMTISGTMQVQLDEATDAWGIKVERVEIKDVRLPVQLQRAMAAEAEAAREARAKVIAAEGEQKASRALREASEVIGDSPAALQLRYLQTLNTISAEKNSTIVFPLPIDLITYFLKTNEATTQQNARAAAAAIGNTPPPLQLAPQQQMGQQQQPQYQQPQQQQQQYQPQQQQQQQQQQPQQQDQLYQQGQQISSAM.

Residues 1 to 164 (MPDSMMDMEH…IHRAEARRAD (164 aa)) are disordered. Over residues 47–60 (SEERDRDRDRERDH) the composition is skewed to basic and acidic residues. Composition is skewed to low complexity over residues 82–104 (QLHQ…QQPQ) and 113–139 (QQQQ…QQLP). The chain crosses the membrane as a helical span at residues 178–198 (LIFLSVALVIMTLPFSLFVCF). Residues 443-505 (GNTPPPLQLA…QQGQQISSAM (63 aa)) are disordered. The segment covering 451 to 505 (LAPQQQMGQQQQPQYQQPQQQQQQYQPQQQQQQQQQQPQQQDQLYQQGQQISSAM) has biased composition (low complexity).

The protein belongs to the band 7/mec-2 family.

The protein localises to the membrane. This Drosophila melanogaster (Fruit fly) protein is Band 7 protein CG42540.